The following is a 229-amino-acid chain: DNA repair protein RecO (229 aa).

It belongs to the RecO family.

Functionally, involved in DNA repair and RecF pathway recombination. The polypeptide is DNA repair protein RecO (Legionella pneumophila subsp. pneumophila (strain Philadelphia 1 / ATCC 33152 / DSM 7513)).